We begin with the raw amino-acid sequence, 831 residues long: DNA polymerase I, thermostable (831 aa).

The 85-residue stretch at R174 to G258 folds into the 5'-3' exonuclease domain. The tract at residues E409–E831 is polymerase.

This sequence belongs to the DNA polymerase type-A family.

The enzyme catalyses DNA(n) + a 2'-deoxyribonucleoside 5'-triphosphate = DNA(n+1) + diphosphate. Its function is as follows. In addition to polymerase activity, this DNA polymerase exhibits 5'-3' exonuclease activity. The sequence is that of DNA polymerase I, thermostable (polA) from Thermus thermophilus.